We begin with the raw amino-acid sequence, 93 residues long: YcgL domain-containing protein VV1_0131 (93 aa).

In terms of domain architecture, YcgL spans 1–84 (MLCSIYKSSK…PPENLLQQHK (84 aa)). The segment at 72-93 (LPPPPENLLQQHKERKAQQKND) is disordered.

The chain is YcgL domain-containing protein VV1_0131 from Vibrio vulnificus (strain CMCP6).